A 199-amino-acid chain; its full sequence is Probable DNA-directed RNA polymerase subunit delta (199 aa).

The region spanning Leu-14–Trp-81 is the HTH HARE-type domain. 3 stretches are compositionally biased toward acidic residues: residues Gly-116–Asp-147, Ala-157–Leu-171, and Leu-182–Lys-199. The interval Gly-116–Lys-199 is disordered.

It belongs to the RpoE family. In terms of assembly, RNAP is composed of a core of 2 alpha, a beta and a beta' subunits. The core is associated with a delta subunit and one of several sigma factors.

Its function is as follows. Participates in both the initiation and recycling phases of transcription. In the presence of the delta subunit, RNAP displays an increased specificity of transcription, a decreased affinity for nucleic acids, and an increased efficiency of RNA synthesis because of enhanced recycling. This chain is Probable DNA-directed RNA polymerase subunit delta, found in Lactiplantibacillus plantarum (strain ATCC BAA-793 / NCIMB 8826 / WCFS1) (Lactobacillus plantarum).